Here is a 145-residue protein sequence, read N- to C-terminus: Cytochrome c550 (145 aa).

The signal sequence occupies residues 1 to 24 (MNKNNVLRGLLVLAGLSLSSLALA). The Cytochrome c domain maps to 60 to 142 (LAVEIGASAY…AIRSYLESVH (83 aa)). 4 residues coordinate heme c: Cys-73, Cys-76, His-77, and Met-119.

As to quaternary structure, monomer. Interacts with the quinoprotein ethanol dehydrogenase (QEDH) ExaA. Binds 1 heme group per subunit.

It localises to the periplasm. It participates in alcohol metabolism; ethanol degradation; acetate from ethanol. Functionally, is an essential component of the ethanol oxidation system that allows P.aeruginosa to grow on ethanol as the sole carbon and energy source. Is the direct electron acceptor of the quinoprotein ethanol dehydrogenase (QEDH). The chain is Cytochrome c550 from Pseudomonas aeruginosa (strain ATCC 15692 / DSM 22644 / CIP 104116 / JCM 14847 / LMG 12228 / 1C / PRS 101 / PAO1).